We begin with the raw amino-acid sequence, 640 residues long: Protein argonaute (640 aa).

The N-terminal domain stretch occupies residues 1 to 100 (MYLNLYEIKI…YIKKKFIDNN (100 aa)). Positions 101–153 (FYYKRGNNYISINDKFPLDSNTNVNAHLTYKIKLYKINERYYISVLPKFTFLS) are linker L1. Positions 154 to 209 (DKPALESPIKSTYLFNIKSGKTFPYISGLNGVLKIDLGENGIKEVLFPENYYFNFT) are PAZ domain. The tract at residues 210 to 291 (SKEAEKFGFS…KYSFYKNDQK (82 aa)) is linker L2. The tract at residues 292–423 (IKIAFFFSSK…YVYKMGNFIP (132 aa)) is mid domain. The segment at 424-640 (ECQPYVIRNL…EWKLYIPYMK (217 aa)) is PIWI domain. Residues Asp-445, Glu-481, Asp-515, and Asn-623 contribute to the active site. Asp-445 provides a ligand contact to Mn(2+). Mn(2+)-binding residues include Asp-515 and Asn-623.

Belongs to the argonaute family. Long pAgo subfamily. It depends on Mn(2+) as a cofactor.

Functionally, a highly versatile argonaute that uses 5'-phospho- and 5'-OH- guide RNA (gRNA) or DNA (gDNA) to cleave target RNA or ssDNA (tDNA) in all possible combinations; has no detectable activity in the absence of guide. Uses short guide sequences (18-21 nucleotides (nt) on average) to bind complementary target nucleic acids resulting in target cleavage in a site-specific manner. Using 5'-phospho-gRNA or 5'-OH-gRNA the cleavage site is 10 nt downstream of the target residue base-paired with the 5'-end of the gRNA, using 5'-phospho-gDNA the cleavage site is 11 nucleotides (nt) downstream, while with 5'-OH-gDNA the cleavage site is 9 nt downstream. This is Protein argonaute from Marinitoga hydrogenitolerans (strain DSM 16785 / JCM 12826 / AT1271).